Consider the following 130-residue polypeptide: Small ribosomal subunit protein uS8 (130 aa).

It belongs to the universal ribosomal protein uS8 family. In terms of assembly, part of the 30S ribosomal subunit. Contacts proteins S5 and S12.

Its function is as follows. One of the primary rRNA binding proteins, it binds directly to 16S rRNA central domain where it helps coordinate assembly of the platform of the 30S subunit. This Coxiella burnetii (strain Dugway 5J108-111) protein is Small ribosomal subunit protein uS8.